A 366-amino-acid chain; its full sequence is Histone-lysine N-methyltransferase SETD7 (366 aa).

MORN repeat units follow at residues 36–58 (FEGN…DGST), 59–81 (LEGY…DGGV), and 106–128 (FKGQ…DGGS). The region spanning 214 to 336 (ERVYVADSLI…AEEELTVAYG (123 aa)) is the SET domain. S-adenosyl-L-methionine contacts are provided by residues 226–228 (AGE), Asn296, His297, and Glu356.

It belongs to the class V-like SAM-binding methyltransferase superfamily. Histone-lysine methyltransferase family. SET7 subfamily. In terms of assembly, interacts with IPF1/PDX-1.

The protein resides in the nucleus. It localises to the chromosome. It catalyses the reaction L-lysyl(4)-[histone H3] + S-adenosyl-L-methionine = N(6)-methyl-L-lysyl(4)-[histone H3] + S-adenosyl-L-homocysteine + H(+). The catalysed reaction is L-lysyl-[protein] + S-adenosyl-L-methionine = N(6)-methyl-L-lysyl-[protein] + S-adenosyl-L-homocysteine + H(+). Histone methyltransferase that specifically monomethylates 'Lys-4' of histone H3. H3 'Lys-4' methylation represents a specific tag for epigenetic transcriptional activation. Plays a central role in the transcriptional activation of genes such as collagenase or insulin. Recruited by IPF1/PDX-1 to the insulin promoter, leading to activate transcription. Also has methyltransferase activity toward non-histone proteins such as CGAS, p53/TP53, TAF10, and possibly TAF7 by recognizing and binding the [KR]-[STA]-K in substrate proteins. Monomethylates 'Lys-189' of TAF10, leading to increase the affinity of TAF10 for RNA polymerase II. Monomethylates 'Lys-372' of p53/TP53, stabilizing p53/TP53 and increasing p53/TP53-mediated transcriptional activation. Monomethylates 'Lys-491' of CGAS, promoting interaction between SGF29 and CGAS. This Mus musculus (Mouse) protein is Histone-lysine N-methyltransferase SETD7 (Setd7).